The chain runs to 255 residues: Adenosylcobinamide-GDP ribazoletransferase (255 aa).

Helical transmembrane passes span 43-63, 64-84, 113-133, 141-161, 195-215, and 234-254; these read LVGT…SLFF, PYQV…GAFH, IGTY…VFLT, FGLM…TLIY, LAAI…AILF, and CLGG…IAVV.

This sequence belongs to the CobS family. Mg(2+) is required as a cofactor.

The protein resides in the cell inner membrane. The catalysed reaction is alpha-ribazole + adenosylcob(III)inamide-GDP = adenosylcob(III)alamin + GMP + H(+). The enzyme catalyses alpha-ribazole 5'-phosphate + adenosylcob(III)inamide-GDP = adenosylcob(III)alamin 5'-phosphate + GMP + H(+). Its pathway is cofactor biosynthesis; adenosylcobalamin biosynthesis; adenosylcobalamin from cob(II)yrinate a,c-diamide: step 7/7. Functionally, joins adenosylcobinamide-GDP and alpha-ribazole to generate adenosylcobalamin (Ado-cobalamin). Also synthesizes adenosylcobalamin 5'-phosphate from adenosylcobinamide-GDP and alpha-ribazole 5'-phosphate. The chain is Adenosylcobinamide-GDP ribazoletransferase from Vibrio vulnificus (strain CMCP6).